Consider the following 108-residue polypeptide: UPF0060 membrane protein Mfla_0485 (108 aa).

A run of 4 helical transmembrane segments spans residues 7-27, 33-53, 63-83, and 87-107; these read FSLF…PYLW, SVWL…LLSL, AAYG…VDGI, and TWDF…MFAP.

This sequence belongs to the UPF0060 family.

It is found in the cell inner membrane. The polypeptide is UPF0060 membrane protein Mfla_0485 (Methylobacillus flagellatus (strain ATCC 51484 / DSM 6875 / VKM B-1610 / KT)).